We begin with the raw amino-acid sequence, 376 residues long: DNA replication and repair protein RecF (376 aa).

An ATP-binding site is contributed by 30-37 (GNNAQGKS).

It belongs to the RecF family.

The protein localises to the cytoplasm. In terms of biological role, the RecF protein is involved in DNA metabolism; it is required for DNA replication and normal SOS inducibility. RecF binds preferentially to single-stranded, linear DNA. It also seems to bind ATP. The protein is DNA replication and repair protein RecF of Nostoc sp. (strain PCC 7120 / SAG 25.82 / UTEX 2576).